Reading from the N-terminus, the 283-residue chain is Putative pyruvate, phosphate dikinase regulatory protein (283 aa).

Gly154–Thr161 provides a ligand contact to ADP.

Belongs to the pyruvate, phosphate/water dikinase regulatory protein family. PDRP subfamily.

It catalyses the reaction N(tele)-phospho-L-histidyl/L-threonyl-[pyruvate, phosphate dikinase] + ADP = N(tele)-phospho-L-histidyl/O-phospho-L-threonyl-[pyruvate, phosphate dikinase] + AMP + H(+). The enzyme catalyses N(tele)-phospho-L-histidyl/O-phospho-L-threonyl-[pyruvate, phosphate dikinase] + phosphate + H(+) = N(tele)-phospho-L-histidyl/L-threonyl-[pyruvate, phosphate dikinase] + diphosphate. Functionally, bifunctional serine/threonine kinase and phosphorylase involved in the regulation of the pyruvate, phosphate dikinase (PPDK) by catalyzing its phosphorylation/dephosphorylation. The polypeptide is Putative pyruvate, phosphate dikinase regulatory protein (Afipia carboxidovorans (strain ATCC 49405 / DSM 1227 / KCTC 32145 / OM5) (Oligotropha carboxidovorans)).